A 2079-amino-acid polypeptide reads, in one-letter code: Non-reducing polyketide synthase Dhc5 (2079 aa).

The tract at residues 9–246 (LLFGDVTDPW…DELNIHALQH (238 aa)) is N-terminal acylcarrier protein transacylase domain (SAT). The 433-residue stretch at 366–798 (NDGIAIVGMA…GGNACLLLED (433 aa)) folds into the Ketosynthase family 3 (KS3) domain. Active-site for beta-ketoacyl synthase activity residues include cysteine 543, histidine 678, and histidine 717. A malonyl-CoA:ACP transacylase (MAT) domain region spans residues 895–1199 (VFVFTGQGSH…MTHSLQPKTS (305 aa)). The active-site For acyl/malonyl transferase activity is the serine 986. The N-terminal hotdog fold stretch occupies residues 1268 to 1414 (EPLISTCAQY…DPTRSQVEWD (147 aa)). The PKS/mFAS DH domain maps to 1268–1584 (EPLISTCAQY…YQELPRATWK (317 aa)). Positions 1304–1581 (MDGHKMQGIG…DIRYQELPRA (278 aa)) are product template (PT) domain. The C-terminal hotdog fold stretch occupies residues 1435 to 1584 (RGHRMQPEVF…YQELPRATWK (150 aa)). The segment at 1613–1639 (RELQQPSSATVPAQETTIDEPEQQEGE) is disordered. Over residues 1615–1628 (LQQPSSATVPAQET) the composition is skewed to polar residues. One can recognise a Carrier domain in the interval 1641–1718 (AAGARLFNAI…DLRKEFRANE (78 aa)). An O-(pantetheine 4'-phosphoryl)serine modification is found at serine 1678. Residues 1721 to 1784 (VENPRFSATP…EQKRPVKIDD (64 aa)) form a disordered region. Positions 1727-1757 (SATPSSAEASIPSSPSSLAHPMSDSASSLSP) are enriched in low complexity. A compositionally biased stretch (basic and acidic residues) spans 1758-1784 (SDREEALPLERQSMTKREQKRPVKIDD). The thioesterase (TE) domain stretch occupies residues 1812–2057 (ADGTGTIATY…LSVAGDHLDL (246 aa)). Catalysis depends on histidine 2064, which acts as the For thioesterase activity.

Its pathway is mycotoxin biosynthesis. In terms of biological role, highly reducing polyketide synthase; part of the gene cluster that mediates the biosynthesis of 10,11-dehydrocurvularin, a prevalent fungal phytotoxin with heat shock response and immune-modulatory activities. The highly reducing polyketide synthase Dhc3 is responsible for biosynthesis up to the tetraketide stage. The non-reducing polyketide synthase Dhc5 then conducts four additional chain extension cycles, producing the unreduced part of the nascent octaketide from C-1 to C-8 in 10,11-dehydrocurvularin. This Alternaria cinerariae protein is Non-reducing polyketide synthase Dhc5.